Reading from the N-terminus, the 160-residue chain is 6,7-dimethyl-8-ribityllumazine synthase (160 aa).

5-amino-6-(D-ribitylamino)uracil is bound by residues Trp-27, 59 to 61 (AIE), and 81 to 83 (VVI). 86–87 (QT) is a binding site for (2S)-2-hydroxy-3-oxobutyl phosphate. His-89 serves as the catalytic Proton donor. 5-amino-6-(D-ribitylamino)uracil is bound at residue Asn-114. Arg-128 provides a ligand contact to (2S)-2-hydroxy-3-oxobutyl phosphate.

The protein belongs to the DMRL synthase family. As to quaternary structure, homopentamer.

It catalyses the reaction (2S)-2-hydroxy-3-oxobutyl phosphate + 5-amino-6-(D-ribitylamino)uracil = 6,7-dimethyl-8-(1-D-ribityl)lumazine + phosphate + 2 H2O + H(+). It participates in cofactor biosynthesis; riboflavin biosynthesis; riboflavin from 2-hydroxy-3-oxobutyl phosphate and 5-amino-6-(D-ribitylamino)uracil: step 1/2. Its function is as follows. Catalyzes the formation of 6,7-dimethyl-8-ribityllumazine by condensation of 5-amino-6-(D-ribitylamino)uracil with 3,4-dihydroxy-2-butanone 4-phosphate. This is the penultimate step in the biosynthesis of riboflavin. This Mycobacterium sp. (strain JLS) protein is 6,7-dimethyl-8-ribityllumazine synthase.